The chain runs to 158 residues: MALITTGNGLIRDLEKFGALGVYVPLEGGYEGRYQRRLRAAGYTTLHITAKGLGDVAAYLTRIHGVRPPHLGKKSTGSGAAVGQVYYLPPILDSHLEQLPPKSKGLVLWIIEGHILSNEELEYLTNLPQLEPRVKVVIERGGDRAFRWTSLEKTLLAS.

It belongs to the complex I NdhN subunit family. NDH-1 can be composed of about 15 different subunits; different subcomplexes with different compositions have been identified which probably have different functions.

The protein localises to the cellular thylakoid membrane. The catalysed reaction is a plastoquinone + NADH + (n+1) H(+)(in) = a plastoquinol + NAD(+) + n H(+)(out). It carries out the reaction a plastoquinone + NADPH + (n+1) H(+)(in) = a plastoquinol + NADP(+) + n H(+)(out). In terms of biological role, NDH-1 shuttles electrons from an unknown electron donor, via FMN and iron-sulfur (Fe-S) centers, to quinones in the respiratory and/or the photosynthetic chain. The immediate electron acceptor for the enzyme in this species is believed to be plastoquinone. Couples the redox reaction to proton translocation, and thus conserves the redox energy in a proton gradient. Cyanobacterial NDH-1 also plays a role in inorganic carbon-concentration. In Nostoc punctiforme (strain ATCC 29133 / PCC 73102), this protein is NAD(P)H-quinone oxidoreductase subunit N.